The primary structure comprises 220 residues: Guanylate kinase (220 aa).

The Guanylate kinase-like domain maps to 15-194 (GLMLVISSPS…AFEGIEAIVK (180 aa)). ATP is bound at residue 22-29 (SPSGAGKS).

The protein belongs to the guanylate kinase family.

The protein localises to the cytoplasm. The enzyme catalyses GMP + ATP = GDP + ADP. Essential for recycling GMP and indirectly, cGMP. This Agrobacterium fabrum (strain C58 / ATCC 33970) (Agrobacterium tumefaciens (strain C58)) protein is Guanylate kinase.